Consider the following 1024-residue polypeptide: Beta-galactosidase (1024 aa).

Residues Asn-103 and Asp-202 each contribute to the substrate site. Residue Asp-202 coordinates Na(+). Mg(2+) contacts are provided by Glu-417, His-419, and Glu-462. Residues Glu-462 and 538–541 (EYAH) contribute to the substrate site. The Proton donor role is filled by Glu-462. Glu-538 serves as the catalytic Nucleophile. Asn-598 serves as a coordination point for Mg(2+). Na(+)-binding residues include Phe-602 and Asn-605. 2 residues coordinate substrate: Asn-605 and Trp-1000.

Belongs to the glycosyl hydrolase 2 family. As to quaternary structure, homotetramer. The cofactor is Mg(2+). Requires Na(+) as cofactor.

It catalyses the reaction Hydrolysis of terminal non-reducing beta-D-galactose residues in beta-D-galactosides.. This chain is Beta-galactosidase, found in Shigella sonnei (strain Ss046).